The chain runs to 82 residues: Defensin-like protein 75 (82 aa).

The N-terminal stretch at 1-26 is a signal peptide; the sequence is MAKIKSLDVITVAIILLLVIADQATA. 4 disulfides stabilise this stretch: Cys-33/Cys-66, Cys-37/Cys-55, Cys-41/Cys-64, and Cys-45/Cys-65.

This sequence belongs to the DEFL family.

Its subcellular location is the secreted. This chain is Defensin-like protein 75 (LCR45), found in Arabidopsis thaliana (Mouse-ear cress).